A 208-amino-acid polypeptide reads, in one-letter code: MTDVTPANAARIGIGGPVGSGKTALIERLIPVLQARGVDLAVITNDLVTKEDAERLRRSGLIDPSRVEAVEAGACPHTVIREDPTLNIAAGDALEARFPGLQLLVFESGGDNLASTFSLDLVDWWIFVIDVAGGDDIPRKRGPGVLRCDLLVINKIDLAPHVGVDLEGMLAEAARVRGGKPVIATNARAGLGIDRVADAIGRAVLFTP.

Residue 16–23 (GPVGSGKT) participates in GTP binding.

It belongs to the SIMIBI class G3E GTPase family. UreG subfamily. In terms of assembly, homodimer. UreD, UreF and UreG form a complex that acts as a GTP-hydrolysis-dependent molecular chaperone, activating the urease apoprotein by helping to assemble the nickel containing metallocenter of UreC. The UreE protein probably delivers the nickel.

It localises to the cytoplasm. Facilitates the functional incorporation of the urease nickel metallocenter. This process requires GTP hydrolysis, probably effectuated by UreG. This is Urease accessory protein UreG 2 from Methylobacterium radiotolerans (strain ATCC 27329 / DSM 1819 / JCM 2831 / NBRC 15690 / NCIMB 10815 / 0-1).